A 126-amino-acid polypeptide reads, in one-letter code: Large-conductance mechanosensitive channel (126 aa).

Helical transmembrane passes span 14-34 (VIDLAVGVIIGSAFTAIVKSL) and 67-87 (GSFLNAIINFFIVAIVVFILV).

Belongs to the MscL family. In terms of assembly, homopentamer.

The protein localises to the cell membrane. In terms of biological role, channel that opens in response to stretch forces in the membrane lipid bilayer. May participate in the regulation of osmotic pressure changes within the cell. This Lactiplantibacillus plantarum (strain ATCC BAA-793 / NCIMB 8826 / WCFS1) (Lactobacillus plantarum) protein is Large-conductance mechanosensitive channel.